The chain runs to 480 residues: Ochratoxinase (480 aa).

Positions 111, 113, 246, 287, and 307 each coordinate Zn(2+). Lysine 246 is an active-site residue. Aspartate 378 is a catalytic residue.

The protein belongs to the metallo-dependent hydrolases superfamily. Ochratoxinase amidase 2 family. Homooctamer. It depends on Zn(2+) as a cofactor.

It localises to the secreted. The enzyme catalyses ochratoxin A + H2O = ochratoxin alpha + L-phenylalanine. Its activity is regulated as follows. The Zn(2+)-specific chelator 1,10-phenanthroline inhibits the enzyme activity. Its function is as follows. Carboxypeptidase that catalyzes the release of a C-terminal amino acid with specific catalytic activity for aromatic amino acids such as phenylalanine. Is able to degrade ochratoxin A, one of the five major mycotoxins most harmful to humans and animals that is produced by Aspergillus and Penicillium species and occurs in a wide range of agricultural products. The chain is Ochratoxinase from Aspergillus niger (strain ATCC MYA-4892 / CBS 513.88 / FGSC A1513).